A 459-amino-acid chain; its full sequence is MKFHTKLYKVGYPLYGAKFVCDDQFVVTGGGGEGNNGVDNKLTVLKVGSSEGNGLRVDEVCDATLPANDDSPTALDAVGDTILIGCNENSAKVKSGAGNSHVRKFRYDGKSLKFESAADIDKSTNPEDYTKVIRLSKDGSEAAIASSKNPPSMAIIDPRNYSVKYEIETGRDVKDLHFSPNGKLIGYITESSLEIISTVTGSCVVRKTDFDRKIILSKMKFLDDNNVLIAATWASSKGILLTKISIKSGKTTVFWSRQISSKFKGITAMDVNDQMNLVMLATNDNSVLLVKLRNLSVGKTFTQVHGFAITRVIFSPDSRYAVSISAAETVHVIEIPSDFADSRSLSESTTQWLMNTIMVLFLAFVLNSMYKEDMHKNVLNYFRSVKSIDSSSILSMEDMEQVTLVGTISTSVRSTTQRFESSKSVSSTSVVARTNVSEKERSQQDPVKKSPEQHQQNQQ.

Topologically, residues 1-351 (MKFHTKLYKV…SRSLSESTTQ (351 aa)) are cytoplasmic. WD repeat units lie at residues 256–291 (SRQI…LLVK) and 294–334 (NLSV…HVIE). A helical; Signal-anchor for type II membrane protein transmembrane segment spans residues 352–370 (WLMNTIMVLFLAFVLNSMY). Residues 371 to 459 (KEDMHKNVLN…SPEQHQQNQQ (89 aa)) lie on the Lumenal side of the membrane. The segment at 417-459 (QRFESSKSVSSTSVVARTNVSEKERSQQDPVKKSPEQHQQNQQ) is disordered. Low complexity predominate over residues 422-435 (SKSVSSTSVVARTN). Asn-435 carries N-linked (GlcNAc...) asparagine glycosylation. Over residues 436–452 (VSEKERSQQDPVKKSPE) the composition is skewed to basic and acidic residues.

The protein belongs to the WD repeat SEC12 family.

Its subcellular location is the endoplasmic reticulum membrane. It localises to the golgi apparatus. It is found in the cis-Golgi network membrane. Guanine nucleotide-exchange factor (GEF) required for the formation or budding of transport vesicles from the ER. This function involves the cytoplasmic domain of the protein, which is thought to interact with the small GTP-binding protein SAR1. Required for autophagy. This chain is Guanine nucleotide-exchange factor SEC12 (SEC12), found in Candida glabrata (strain ATCC 2001 / BCRC 20586 / JCM 3761 / NBRC 0622 / NRRL Y-65 / CBS 138) (Yeast).